The primary structure comprises 340 residues: Holliday junction branch migration complex subunit RuvB (340 aa).

The interval Met-1–Tyr-182 is large ATPase domain (RuvB-L). ATP is bound by residues Leu-21, Arg-22, Gly-63, Lys-66, Thr-67, Thr-68, Glu-129–Phe-131, Arg-172, Tyr-182, and Arg-219. Residue Thr-67 coordinates Mg(2+). Positions Thr-183–Gly-253 are small ATPAse domain (RuvB-S). Positions His-256 to Gly-340 are head domain (RuvB-H). DNA-binding residues include Arg-292, Arg-311, and Arg-316.

The protein belongs to the RuvB family. In terms of assembly, homohexamer. Forms an RuvA(8)-RuvB(12)-Holliday junction (HJ) complex. HJ DNA is sandwiched between 2 RuvA tetramers; dsDNA enters through RuvA and exits via RuvB. An RuvB hexamer assembles on each DNA strand where it exits the tetramer. Each RuvB hexamer is contacted by two RuvA subunits (via domain III) on 2 adjacent RuvB subunits; this complex drives branch migration. In the full resolvosome a probable DNA-RuvA(4)-RuvB(12)-RuvC(2) complex forms which resolves the HJ.

It is found in the cytoplasm. The catalysed reaction is ATP + H2O = ADP + phosphate + H(+). Its function is as follows. The RuvA-RuvB-RuvC complex processes Holliday junction (HJ) DNA during genetic recombination and DNA repair, while the RuvA-RuvB complex plays an important role in the rescue of blocked DNA replication forks via replication fork reversal (RFR). RuvA specifically binds to HJ cruciform DNA, conferring on it an open structure. The RuvB hexamer acts as an ATP-dependent pump, pulling dsDNA into and through the RuvAB complex. RuvB forms 2 homohexamers on either side of HJ DNA bound by 1 or 2 RuvA tetramers; 4 subunits per hexamer contact DNA at a time. Coordinated motions by a converter formed by DNA-disengaged RuvB subunits stimulates ATP hydrolysis and nucleotide exchange. Immobilization of the converter enables RuvB to convert the ATP-contained energy into a lever motion, pulling 2 nucleotides of DNA out of the RuvA tetramer per ATP hydrolyzed, thus driving DNA branch migration. The RuvB motors rotate together with the DNA substrate, which together with the progressing nucleotide cycle form the mechanistic basis for DNA recombination by continuous HJ branch migration. Branch migration allows RuvC to scan DNA until it finds its consensus sequence, where it cleaves and resolves cruciform DNA. This is Holliday junction branch migration complex subunit RuvB from Roseobacter denitrificans (strain ATCC 33942 / OCh 114) (Erythrobacter sp. (strain OCh 114)).